The chain runs to 438 residues: 5-methylthioadenosine/S-adenosylhomocysteine deaminase (438 aa).

2 residues coordinate Zn(2+): His66 and His68. Glu95, Arg148, and His188 together coordinate substrate. His215 is a Zn(2+) binding site. The substrate site is built by Glu218 and Asp305. Asp305 is a Zn(2+) binding site.

Belongs to the metallo-dependent hydrolases superfamily. MTA/SAH deaminase family. Requires Zn(2+) as cofactor.

The catalysed reaction is S-adenosyl-L-homocysteine + H2O + H(+) = S-inosyl-L-homocysteine + NH4(+). The enzyme catalyses S-methyl-5'-thioadenosine + H2O + H(+) = S-methyl-5'-thioinosine + NH4(+). Its function is as follows. Catalyzes the deamination of 5-methylthioadenosine and S-adenosyl-L-homocysteine into 5-methylthioinosine and S-inosyl-L-homocysteine, respectively. Is also able to deaminate adenosine. This chain is 5-methylthioadenosine/S-adenosylhomocysteine deaminase, found in Halalkalibacterium halodurans (strain ATCC BAA-125 / DSM 18197 / FERM 7344 / JCM 9153 / C-125) (Bacillus halodurans).